We begin with the raw amino-acid sequence, 128 residues long: Aspartate 1-decarboxylase (128 aa).

The active-site Schiff-base intermediate with substrate; via pyruvic acid is the serine 25. Pyruvic acid (Ser) is present on serine 25. Threonine 57 contributes to the substrate binding site. Residue tyrosine 58 is the Proton donor of the active site. 73-75 contributes to the substrate binding site; that stretch reads GAA.

This sequence belongs to the PanD family. In terms of assembly, heterooctamer of four alpha and four beta subunits. Pyruvate is required as a cofactor. Post-translationally, is synthesized initially as an inactive proenzyme, which is activated by self-cleavage at a specific serine bond to produce a beta-subunit with a hydroxyl group at its C-terminus and an alpha-subunit with a pyruvoyl group at its N-terminus.

Its subcellular location is the cytoplasm. The enzyme catalyses L-aspartate + H(+) = beta-alanine + CO2. Its pathway is cofactor biosynthesis; (R)-pantothenate biosynthesis; beta-alanine from L-aspartate: step 1/1. In terms of biological role, catalyzes the pyruvoyl-dependent decarboxylation of aspartate to produce beta-alanine. The sequence is that of Aspartate 1-decarboxylase from Moorella thermoacetica (strain ATCC 39073 / JCM 9320).